The sequence spans 435 residues: Hyaluronidase-1 (435 aa).

Positions methionine 1–glycine 21 are cleaved as a signal peptide. Intrachain disulfides connect cysteine 43–cysteine 333 and cysteine 207–cysteine 221. Asparagine 70, asparagine 99, asparagine 107, and asparagine 121 each carry an N-linked (GlcNAc...) asparagine glycan. The Proton donor role is filled by glutamate 131. N-linked (GlcNAc...) asparagine glycans are attached at residues asparagine 216, asparagine 256, and asparagine 350. Intrachain disulfides connect cysteine 358–cysteine 369, cysteine 363–cysteine 418, and cysteine 420–cysteine 429. One can recognise an EGF-like domain in the interval cysteine 418–cysteine 429.

This sequence belongs to the glycosyl hydrolase 56 family. As to expression, highly expressed in spleen, kidney, and lung.

It localises to the secreted. The protein resides in the lysosome. It catalyses the reaction Random hydrolysis of (1-&gt;4)-linkages between N-acetyl-beta-D-glucosamine and D-glucuronate residues in hyaluronate.. Functionally, may have a role in promoting tumor progression. May block the TGFB1-enhanced cell growth. The sequence is that of Hyaluronidase-1 (HYAL1) from Sus scrofa (Pig).